We begin with the raw amino-acid sequence, 201 residues long: Small ribosomal subunit protein uS4c (201 aa).

Residues 89–150 form the S4 RNA-binding domain; sequence MRLDNILFRL…KQRSKVLIQN (62 aa).

Belongs to the universal ribosomal protein uS4 family. Part of the 30S ribosomal subunit. Contacts protein S5. The interaction surface between S4 and S5 is involved in control of translational fidelity.

It is found in the plastid. Its subcellular location is the chloroplast. Functionally, one of the primary rRNA binding proteins, it binds directly to 16S rRNA where it nucleates assembly of the body of the 30S subunit. In terms of biological role, with S5 and S12 plays an important role in translational accuracy. In Dioscorea elephantipes (Elephant's foot yam), this protein is Small ribosomal subunit protein uS4c (rps4).